The sequence spans 204 residues: Large ribosomal subunit protein uL18 (204 aa).

Belongs to the universal ribosomal protein uL18 family. Part of the 50S ribosomal subunit. Contacts the 5S and 23S rRNAs.

This is one of the proteins that bind and probably mediate the attachment of the 5S RNA into the large ribosomal subunit, where it forms part of the central protuberance. In Ignicoccus hospitalis (strain KIN4/I / DSM 18386 / JCM 14125), this protein is Large ribosomal subunit protein uL18.